The chain runs to 342 residues: Probable alcohol acetyltransferase (342 aa).

The N-terminal 38 residues, 1 to 38, are a transit peptide targeting the mitochondrion; it reads MMILGKAGILAQYGTIYVRQNTIRNNLSSCIFKQSLCA. Positions 39–46 are cleaved as a propeptide — removed in mature form; it reads FHSLAKVL. The 252-residue stretch at 75–326 folds into the AB hydrolase-1 domain; the sequence is PPIIILHGLF…AGHWVNAEKP (252 aa). Active-site charge relay system residues include Ser152 and His319.

This sequence belongs to the AB hydrolase superfamily. Processed by both the mitochondrial processing peptidase (MPP) and the mitochondrial octapeptidyl aminopeptidase (OCT1).

It localises to the mitochondrion. Its function is as follows. Probable alcohol acetyltransferase that uses acetyl-CoA to synthesize acetate esters from various alcohols. Not involved in the synthesis of ethyl acetate. The protein is Probable alcohol acetyltransferase (IMO32) of Saccharomyces cerevisiae (strain ATCC 204508 / S288c) (Baker's yeast).